The sequence spans 1912 residues: Vitellogenin-1 (1912 aa).

The N-terminal stretch at 1–15 (MRGLISALVLTLVGS) is a signal peptide. Positions 24–663 (FGENKVYTYN…AGSLIPTMAV (640 aa)) constitute a Vitellogenin domain. N-linked (GlcNAc...) asparagine glycosylation is present at asparagine 163. The interval 948-972 (DSASGETDNIRDRQSVEDVSSGNSF) is disordered. Asparagine 991 carries N-linked (GlcNAc...) asparagine glycosylation. Disordered regions lie at residues 1080-1329 (KILD…SYDI) and 1351-1432 (HWHS…RERN). Composition is skewed to low complexity over residues 1092–1124 (NSRSSSSSASSISESSESTTSTPSSSDSDNRAS) and 1150–1235 (SSSS…SSSK). Asparagine 1206 carries an N-linked (GlcNAc...) asparagine glycan. The segment covering 1259–1269 (EGERSVHEQKQ) has biased composition (basic and acidic residues). Positions 1273-1299 (SSSSSSSRASSNSRSTSSSTSSSSESS) are enriched in low complexity. The segment covering 1306-1316 (WKQDREAETKR) has biased composition (basic and acidic residues). Over residues 1319 to 1328 (SQFNSHSSYD) the composition is skewed to polar residues. Low complexity predominate over residues 1357–1381 (RTSSSSSSSSSESGSSHSNSSSSDS). The N-linked (GlcNAc...) asparagine glycan is linked to asparagine 1375. Basic residues predominate over residues 1397–1409 (SHRHGEKAAHSSR). Residues 1640–1818 (STCEVSKGDF…SWVLLEETCS (179 aa)) enclose the VWFD domain. 2 disulfide bridges follow: cysteine 1642–cysteine 1781 and cysteine 1665–cysteine 1817. N-linked (GlcNAc...) asparagine glycosylation is found at asparagine 1662, asparagine 1698, and asparagine 1703.

Phosvitin, an egg yolk storage protein, is one of the most highly phosphorylated (10%) proteins in nature. In terms of processing, cathepsin D is responsible for intraoocytic processing of vitellogenin. Post-translationally, may contain intrachain disulfide bonds. As to expression, produced by the liver, secreted into the blood and then sequestered by receptor mediated endocytosis into growing oocytes, where it is generally cleaved, giving rise to the respective yolk components.

Its function is as follows. Precursor of the egg-yolk proteins that are sources of nutrients during early development of oviparous organisms. Phosvitin is believed to be of importance in sequestering calcium, iron and other cations for the developing embryo. The protein is Vitellogenin-1 (VTG1) of Gallus gallus (Chicken).